The sequence spans 299 residues: Tyrosine recombinase XerC (299 aa).

The Core-binding (CB) domain maps to 1-85 (MKRQLEAYCA…AVRGLYRYLN (85 aa)). Residues 106–285 (RLPKVLDTDR…DFQHLAAVYD (180 aa)) form the Tyr recombinase domain. Active-site residues include R146, K170, H237, R240, and H263. Residue Y272 is the O-(3'-phospho-DNA)-tyrosine intermediate of the active site.

This sequence belongs to the 'phage' integrase family. XerC subfamily. In terms of assembly, forms a cyclic heterotetrameric complex composed of two molecules of XerC and two molecules of XerD.

The protein localises to the cytoplasm. In terms of biological role, site-specific tyrosine recombinase, which acts by catalyzing the cutting and rejoining of the recombining DNA molecules. The XerC-XerD complex is essential to convert dimers of the bacterial chromosome into monomers to permit their segregation at cell division. It also contributes to the segregational stability of plasmids. This Pseudomonas putida (strain ATCC 47054 / DSM 6125 / CFBP 8728 / NCIMB 11950 / KT2440) protein is Tyrosine recombinase XerC.